A 151-amino-acid chain; its full sequence is Calcium-binding protein SPEC 2C (151 aa).

4 consecutive EF-hand domains span residues 10-45 (EQRK…IEIE), 46-78 (LTQE…KAEQ), 81-116 (GKGA…CTDP), and 118-151 (MTKE…QSSY). Residues Asp-23, Asp-25, Asp-27, Lys-29, Glu-34, Asp-59, Asp-61, Ser-63, Glu-70, Asp-94, Asp-96, Ser-98, Ser-100, Glu-105, Asp-131, Asp-135, Glu-137, and Glu-142 each coordinate Ca(2+).

In terms of tissue distribution, found in cell lineages giving rise to the aboral ectoderm, a squamous epithelium covering the surface of the late stage embryo and larva.

Calcium-binding protein involved in larval development and metamorphosis. Likely to function as calcium buffers mediating the transport of calcium from the sea water to the blastocoel where calcium is required for skeleton formation. The sequence is that of Calcium-binding protein SPEC 2C (SPEC2C) from Strongylocentrotus purpuratus (Purple sea urchin).